The primary structure comprises 877 residues: Alanine--tRNA ligase (877 aa).

Residues H562, H566, C664, and H668 each contribute to the Zn(2+) site.

The protein belongs to the class-II aminoacyl-tRNA synthetase family. Zn(2+) is required as a cofactor.

It localises to the cytoplasm. It catalyses the reaction tRNA(Ala) + L-alanine + ATP = L-alanyl-tRNA(Ala) + AMP + diphosphate. Its function is as follows. Catalyzes the attachment of alanine to tRNA(Ala) in a two-step reaction: alanine is first activated by ATP to form Ala-AMP and then transferred to the acceptor end of tRNA(Ala). Also edits incorrectly charged Ser-tRNA(Ala) and Gly-tRNA(Ala) via its editing domain. The protein is Alanine--tRNA ligase of Picosynechococcus sp. (strain ATCC 27264 / PCC 7002 / PR-6) (Agmenellum quadruplicatum).